The chain runs to 143 residues: Adrenodoxin, mitochondrial (143 aa).

A mitochondrion-targeting transit peptide spans 1–19 (CSAVAVRTLRPLSLSARAA). The region spanning 26-130 (ITVHFINRDG…NMTVRVPEAV (105 aa)) is the 2Fe-2S ferredoxin-type domain. Residues C65, C71, C74, and C111 each coordinate [2Fe-2S] cluster.

This sequence belongs to the adrenodoxin/putidaredoxin family. The cofactor is [2Fe-2S] cluster.

It localises to the mitochondrion matrix. Functionally, essential for the synthesis of various steroid hormones. Participates in the reduction of mitochondrial cytochrome P450 for steroidogenesis. Transfers electrons from adrenodoxin reductase to CYP11A1, a cytochrome P450 that catalyzes cholesterol side-chain cleavage. Does not form a ternary complex with adrenodoxin reductase and CYP11A1 but shuttles between the two enzymes to transfer electrons. This is Adrenodoxin, mitochondrial (FDX1) from Gallus gallus (Chicken).